Consider the following 602-residue polypeptide: Type II restriction enzyme StsI (602 aa).

It carries out the reaction Endonucleolytic cleavage of DNA to give specific double-stranded fragments with terminal 5'-phosphates.. In terms of biological role, an S subtype restriction enzyme that recognizes the double-stranded sequences 5'-GGATG-3' and 3'-CATCC-5' and cleaves respectively 15 bases after G-1 and 14 bases before C-1. The polypeptide is Type II restriction enzyme StsI (stsIR) (Streptococcus sanguinis).